Reading from the N-terminus, the 886-residue chain is Translation initiation factor IF-2 (886 aa).

Disordered regions lie at residues Met-1 to Pro-25, Arg-50 to Glu-229, and Lys-253 to Glu-272. Basic and acidic residues predominate over residues Arg-50 to Arg-60. Residues Ala-63–Pro-73 are compositionally biased toward low complexity. The segment covering Gln-74–Gln-83 has biased composition (pro residues). Residues Pro-84 to Ser-106 are compositionally biased toward low complexity. Residues Leu-107–Arg-181 show a composition bias toward basic and acidic residues. Low complexity predominate over residues Gly-185–Arg-225. The tr-type G domain maps to Ser-383–Lys-553. A G1 region spans residues Gly-392–Thr-399. Gly-392 to Thr-399 is a GTP binding site. A G2 region spans residues Gly-417 to His-421. The tract at residues Asp-439–Gly-442 is G3. Residues Asp-439–His-443 and Asn-493–Asp-496 contribute to the GTP site. The G4 stretch occupies residues Asn-493–Asp-496. The interval Ser-529 to Thr-531 is G5.

The protein belongs to the TRAFAC class translation factor GTPase superfamily. Classic translation factor GTPase family. IF-2 subfamily.

The protein resides in the cytoplasm. Its function is as follows. One of the essential components for the initiation of protein synthesis. Protects formylmethionyl-tRNA from spontaneous hydrolysis and promotes its binding to the 30S ribosomal subunits. Also involved in the hydrolysis of GTP during the formation of the 70S ribosomal complex. This is Translation initiation factor IF-2 from Methylocella silvestris (strain DSM 15510 / CIP 108128 / LMG 27833 / NCIMB 13906 / BL2).